The sequence spans 147 residues: Ribonuclease 4 (147 aa).

Positions 1–28 (MALQRTHSLLLLLLLTLLGLGLVQPSYG) are cleaved as a signal peptide. Gln29 bears the Pyrrolidone carboxylic acid mark. Residues Arg35, His40, Lys68, Asn71, and Thr72 each coordinate dUMP. Residue His40 is the Proton acceptor of the active site. Intrachain disulfides connect Cys53-Cys109, Cys67-Cys120, Cys85-Cys135, and Cys92-Cys99. The active-site Proton donor is the His144. Position 145 (Phe145) interacts with dUMP.

Belongs to the pancreatic ribonuclease family. Expressed in the cortical and medullary tubules of the kidney, and in the transitional epithelium of the urinary bladder (at protein level).

It is found in the secreted. Cleaves preferentially after uridine bases. Has antimicrobial activity against uropathogenic E.coli (UPEC). Probably contributes to urinary tract sterility. The protein is Ribonuclease 4 (RNASE4) of Homo sapiens (Human).